A 67-amino-acid polypeptide reads, in one-letter code: Tachystatin-A2 (67 aa).

A signal peptide spans 1–23 (MKLQNTLILIGCLFLMGAMIGDA). 3 disulfides stabilise this stretch: C27–C47, C34–C52, and C46–C64.

As to expression, granular hemocytes, small secretory granules.

Its subcellular location is the secreted. Functionally, exhibits stronger antimicrobial activity against the Gram-positive bacteria (S.aureus (IC(50)=4.2 ug/ml)) and fungi (C.albicans (IC(50)=3.0 ug/ml) and P.pastoris (IC(50)=0.5 ug/ml)) than Gram-negative bacteria (E.coli (IC(50)=25 ug/ml)). Binds to chitin (8.4 uM are required to obtain 50% of binding). Does not cause hemolysis on sheep erythrocytes. Has no blocking activity on the P-type calcium channel. Has also been shown to weakly inhibit Kv1.2/KCNA2 voltage-gated potassium channels and TRPV1 receptors. In Tachypleus tridentatus (Japanese horseshoe crab), this protein is Tachystatin-A2.